Here is a 271-residue protein sequence, read N- to C-terminus: MPELPEVEVISNFLLDKIKNKQISNVIVNNWNLRAPITKNIDDMLKGKVIRNIKRRGKYTIWNTDGSVAVIIHLGMSGKLIYADHDQMRNKHDHVVFLFSDNTSIIFNDPRRFGLVIVLNKEQETDFFSDFGIEPLTDEFSGDYLQELLKNKKVNIKSALMDNKSIVGVGNIYASESLFRARISPLRSAKNLTYRECEKLAAEIKNTLSDAIAAGGSTLKDYAQPSGSAGYFQNNFYVYGKVQKPCKICNNIITLIRQNGRSTYFCNACQN.

Pro-2 functions as the Schiff-base intermediate with DNA in the catalytic mechanism. Glu-3 acts as the Proton donor in catalysis. The active-site Proton donor; for beta-elimination activity is the Lys-58. DNA-binding residues include His-92, Arg-111, and Lys-152. An FPG-type zinc finger spans residues 237 to 271; that stretch reads YVYGKVQKPCKICNNIITLIRQNGRSTYFCNACQN. The Proton donor; for delta-elimination activity role is filled by Arg-261.

The protein belongs to the FPG family. As to quaternary structure, monomer. Requires Zn(2+) as cofactor.

It catalyses the reaction Hydrolysis of DNA containing ring-opened 7-methylguanine residues, releasing 2,6-diamino-4-hydroxy-5-(N-methyl)formamidopyrimidine.. It carries out the reaction 2'-deoxyribonucleotide-(2'-deoxyribose 5'-phosphate)-2'-deoxyribonucleotide-DNA = a 3'-end 2'-deoxyribonucleotide-(2,3-dehydro-2,3-deoxyribose 5'-phosphate)-DNA + a 5'-end 5'-phospho-2'-deoxyribonucleoside-DNA + H(+). Its function is as follows. Involved in base excision repair of DNA damaged by oxidation or by mutagenic agents. Acts as a DNA glycosylase that recognizes and removes damaged bases. Has a preference for oxidized purines, such as 7,8-dihydro-8-oxoguanine (8-oxoG). Has AP (apurinic/apyrimidinic) lyase activity and introduces nicks in the DNA strand. Cleaves the DNA backbone by beta-delta elimination to generate a single-strand break at the site of the removed base with both 3'- and 5'-phosphates. This chain is Formamidopyrimidine-DNA glycosylase, found in Wolbachia pipientis wMel.